The chain runs to 618 residues: V-type proton ATPase catalytic subunit A (618 aa).

251–258 (GAFGCGKT) provides a ligand contact to ATP.

This sequence belongs to the ATPase alpha/beta chains family. V-ATPase is a heteromultimeric enzyme composed of a peripheral catalytic V1 complex (main components: subunits A, B, C, D, E, and F) attached to an integral membrane V0 proton pore complex (main component: the proteolipid protein).

It carries out the reaction ATP + H2O + 4 H(+)(in) = ADP + phosphate + 5 H(+)(out). Functionally, catalytic subunit of the peripheral V1 complex of vacuolar ATPase. V-ATPase vacuolar ATPase is responsible for acidifying a variety of intracellular compartments in eukaryotic cells. This is V-type proton ATPase catalytic subunit A (vatA) from Dictyostelium discoideum (Social amoeba).